The sequence spans 90 residues: DNA-binding protein HU (90 aa).

This sequence belongs to the bacterial histone-like protein family. In terms of assembly, homodimer.

Its function is as follows. Histone-like DNA-binding protein which is capable of wrapping DNA to stabilize it, and thus to prevent its denaturation under extreme environmental conditions. The protein is DNA-binding protein HU (hup) of Haemophilus influenzae (strain ATCC 51907 / DSM 11121 / KW20 / Rd).